The chain runs to 436 residues: Methylenetetrahydrofolate--tRNA-(uracil-5-)-methyltransferase TrmFO (436 aa).

10–15 (GAGLAG) lines the FAD pocket.

The protein belongs to the MnmG family. TrmFO subfamily. FAD serves as cofactor.

The protein localises to the cytoplasm. The catalysed reaction is uridine(54) in tRNA + (6R)-5,10-methylene-5,6,7,8-tetrahydrofolate + NADH + H(+) = 5-methyluridine(54) in tRNA + (6S)-5,6,7,8-tetrahydrofolate + NAD(+). It carries out the reaction uridine(54) in tRNA + (6R)-5,10-methylene-5,6,7,8-tetrahydrofolate + NADPH + H(+) = 5-methyluridine(54) in tRNA + (6S)-5,6,7,8-tetrahydrofolate + NADP(+). In terms of biological role, catalyzes the folate-dependent formation of 5-methyl-uridine at position 54 (M-5-U54) in all tRNAs. The polypeptide is Methylenetetrahydrofolate--tRNA-(uracil-5-)-methyltransferase TrmFO (Staphylococcus carnosus (strain TM300)).